The chain runs to 365 residues: Phospho-N-acetylmuramoyl-pentapeptide-transferase (365 aa).

A run of 10 helical transmembrane segments spans residues 22 to 42 (YVSVRIIMISITSLLITLFLG), 74 to 94 (TMGGVLILSSVIISALLWGSL), 95 to 115 (SSIYLWILILVVIFFGAIGFF), 134 to 154 (KFALQSIFSIILAIVLFYLLS), 169 to 189 (LHIPMGIFLFVVLTFFIINGS), 201 to 221 (GLAIVPVVLVAAGLGIYAYIQ), 240 to 260 (LAEVAVFCAALCGSGLAFLWF), 268 to 288 (FMGDVGSLTLGAVLGVIAVMI), 292 to 312 (LIFFIMGLLFVVEALSVMLQV), and 342 to 362 (KVVIRFWIVSLILFLIGLVAI).

The protein belongs to the glycosyltransferase 4 family. MraY subfamily. Mg(2+) is required as a cofactor.

The protein localises to the cell inner membrane. The catalysed reaction is UDP-N-acetyl-alpha-D-muramoyl-L-alanyl-gamma-D-glutamyl-meso-2,6-diaminopimeloyl-D-alanyl-D-alanine + di-trans,octa-cis-undecaprenyl phosphate = di-trans,octa-cis-undecaprenyl diphospho-N-acetyl-alpha-D-muramoyl-L-alanyl-D-glutamyl-meso-2,6-diaminopimeloyl-D-alanyl-D-alanine + UMP. The protein operates within cell wall biogenesis; peptidoglycan biosynthesis. Catalyzes the initial step of the lipid cycle reactions in the biosynthesis of the cell wall peptidoglycan: transfers peptidoglycan precursor phospho-MurNAc-pentapeptide from UDP-MurNAc-pentapeptide onto the lipid carrier undecaprenyl phosphate, yielding undecaprenyl-pyrophosphoryl-MurNAc-pentapeptide, known as lipid I. The chain is Phospho-N-acetylmuramoyl-pentapeptide-transferase from Francisella philomiragia subsp. philomiragia (strain ATCC 25017 / CCUG 19701 / FSC 153 / O#319-036).